A 262-amino-acid polypeptide reads, in one-letter code: uncharacterized protein (262 aa).

7 consecutive transmembrane segments (helical) span residues 46-66 (GAVGWQLAGLTALLSAFCYAA), 77-97 (CLTESSPSLVFVIPVTSVIFI), 108-128 (IGVLLFYTLLHVPPLIVICLC), 133-153 (LVISAALFTLLAFLSCTGVAL), 163-183 (QIVVVHALITLTFTAIVVVIL), 186-206 (GWSWCFKIVLSFSVLITCLAV), and 226-246 (LLAAVKVFLSLVFTLLMVLRI).

The protein belongs to the cytomegalovirus US12 family.

The protein resides in the membrane. This is an uncharacterized protein from Homo sapiens (Human).